Consider the following 376-residue polypeptide: Palmitoyl-[acyl-carrier-protein] 4-desaturase 2, chloroplastic (376 aa).

The N-terminal 33 residues, 1–33 (MELHLALRASPLPAADPGRRPPPPRGNFATNCT), are a transit peptide targeting the chloroplast. Positions 114, 149, 152, 202, 235, and 238 each coordinate Fe cation.

Belongs to the fatty acid desaturase type 2 family. In terms of assembly, homodimer. It depends on Fe(2+) as a cofactor. As to expression, preferentially expressed in the flower labellum.

Its subcellular location is the plastid. It is found in the chloroplast stroma. The enzyme catalyses hexadecanoyl-[ACP] + 2 reduced [2Fe-2S]-[ferredoxin] + O2 + 2 H(+) = (4Z)-hexadecenoyl-[ACP] + 2 oxidized [2Fe-2S]-[ferredoxin] + 2 H2O. The catalysed reaction is octadecanoyl-[ACP] + 2 reduced [2Fe-2S]-[ferredoxin] + O2 + 2 H(+) = (9Z)-octadecenoyl-[ACP] + 2 oxidized [2Fe-2S]-[ferredoxin] + 2 H2O. It functions in the pathway lipid metabolism; fatty acid metabolism. In terms of biological role, converts stearoyl-ACP to oleoyl-ACP by introduction of a cis double bond between carbons 9 and 10 of the acyl chain. Converts palmitoyl-ACP to (4Z)-hexadec-4-enoyl-ACP by introduction of a cis double bond between carbons 4 and 5 of the acyl chain. Catalyzes the desaturation of saturated fatty acid 18:0 and 16:0 to generate 18:1 (delta-9) and 16:1 (delta-4) intermediates, expected to give rise to 9-alkenes and 12-alkenes, respectively. This Ophrys arachnitiformis subsp. archipelagi (Orchid) protein is Palmitoyl-[acyl-carrier-protein] 4-desaturase 2, chloroplastic (SAD2).